Reading from the N-terminus, the 70-residue chain is Large ribosomal subunit protein uL29 (70 aa).

It belongs to the universal ribosomal protein uL29 family.

The sequence is that of Large ribosomal subunit protein uL29 from Symbiobacterium thermophilum (strain DSM 24528 / JCM 14929 / IAM 14863 / T).